We begin with the raw amino-acid sequence, 196 residues long: Protein Flattop (196 aa).

The interval 107–196 (NGLRPEIFGK…PHAGRNLAEV (90 aa)) is disordered. A compositionally biased stretch (basic and acidic residues) spans 113–124 (IFGKPHDPDSQK). A compositionally biased stretch (low complexity) spans 137–149 (APSPTIIPSSPAS). Polar residues predominate over residues 150 to 162 (NLSSPDQLQSSHP).

It belongs to the Flattop family. Microtubule inner protein component of sperm flagellar doublet microtubules. Interacts with DLG3. Expressed in trachea multiciliated cells.

It is found in the cytoplasm. Its subcellular location is the cytoskeleton. It localises to the cilium basal body. The protein resides in the cell projection. The protein localises to the cilium. It is found in the apical cell membrane. Its subcellular location is the cilium axoneme. It localises to the flagellum axoneme. Microtubule inner protein (MIP) part of the dynein-decorated doublet microtubules (DMTs) in cilia axoneme. Acts as a regulator of cilium basal body docking and positioning in mono- and multiciliated cells. Regulates basal body docking and cilia formation in multiciliated lung cells. Regulates kinocilium positioning and stereocilia bundle morphogenesis in the inner ear. In Bos taurus (Bovine), this protein is Protein Flattop.